Reading from the N-terminus, the 313-residue chain is Probable GTP 3',8-cyclase (313 aa).

In terms of domain architecture, Radical SAM core spans 4–224; it reads VYGRELEDLR…EIRNKHKRPR (221 aa). Residue Arg-13 participates in GTP binding. Cys-20, Cys-24, and Cys-27 together coordinate [4Fe-4S] cluster. Lys-60 is a binding site for GTP. Gly-64 is an S-adenosyl-L-methionine binding site. Thr-90 contributes to the GTP binding site. Position 114 (Ser-114) interacts with S-adenosyl-L-methionine. Lys-151 is a binding site for GTP. Residues Cys-244 and Cys-247 each contribute to the [4Fe-4S] cluster site. 249–251 contributes to the GTP binding site; it reads RIR. [4Fe-4S] cluster is bound at residue Cys-261.

This sequence belongs to the radical SAM superfamily. MoaA family. It depends on [4Fe-4S] cluster as a cofactor.

It catalyses the reaction GTP + AH2 + S-adenosyl-L-methionine = (8S)-3',8-cyclo-7,8-dihydroguanosine 5'-triphosphate + 5'-deoxyadenosine + L-methionine + A + H(+). Its pathway is cofactor biosynthesis; molybdopterin biosynthesis. Its function is as follows. Catalyzes the cyclization of GTP to (8S)-3',8-cyclo-7,8-dihydroguanosine 5'-triphosphate. In Sulfolobus acidocaldarius (strain ATCC 33909 / DSM 639 / JCM 8929 / NBRC 15157 / NCIMB 11770), this protein is Probable GTP 3',8-cyclase.